A 365-amino-acid polypeptide reads, in one-letter code: tRNA/tmRNA (uracil-C(5))-methyltransferase (365 aa).

S-adenosyl-L-methionine contacts are provided by Gln189, Tyr217, Asn222, Glu238, and Asp298. Cys323 serves as the catalytic Nucleophile. Catalysis depends on Glu357, which acts as the Proton acceptor.

This sequence belongs to the class I-like SAM-binding methyltransferase superfamily. RNA M5U methyltransferase family. TrmA subfamily.

The catalysed reaction is uridine(54) in tRNA + S-adenosyl-L-methionine = 5-methyluridine(54) in tRNA + S-adenosyl-L-homocysteine + H(+). It carries out the reaction uridine(341) in tmRNA + S-adenosyl-L-methionine = 5-methyluridine(341) in tmRNA + S-adenosyl-L-homocysteine + H(+). In terms of biological role, dual-specificity methyltransferase that catalyzes the formation of 5-methyluridine at position 54 (m5U54) in all tRNAs, and that of position 341 (m5U341) in tmRNA (transfer-mRNA). The protein is tRNA/tmRNA (uracil-C(5))-methyltransferase of Shewanella denitrificans (strain OS217 / ATCC BAA-1090 / DSM 15013).